The primary structure comprises 214 residues: MADS-box protein CMB2 (214 aa).

The MADS-box domain maps to 3 to 58 (RGKLEIRKIENKTNRQVTFSKRRNGIMKKAQELTVLCDAKVSLLMISSTHKLHHYL). The K-box domain occupies 84–174 (WERMQEQHRK…VMELEAKFRG (91 aa)).

As to expression, in flowers. Not found in vegetative tissues.

It is found in the nucleus. The protein is MADS-box protein CMB2 (CMB2) of Dianthus caryophyllus (Carnation).